Consider the following 202-residue polypeptide: MGLSNRAIIIDGKNHLLGRLASIVAKKLLQGDKVVVLRAEEIVISGNFHRSKLKYMSFLRKRCNINPARGAFHYRAPGKIFWRTVRGMLPHKTNRGNEALKNLRAYEGVPAKYQKTKSLHAPSASRFRLQPRRKFCVVGRLSHEVGWQFQDVVAKLEAKRKVKGAAYFEQKKKMDKLAVQAKKNAAPKIAQYQKIIEALGYN.

The protein belongs to the universal ribosomal protein uL13 family.

This Caenorhabditis elegans protein is Large ribosomal subunit protein uL13.